We begin with the raw amino-acid sequence, 432 residues long: Enolase (432 aa).

Q167 is a binding site for (2R)-2-phosphoglycerate. The active-site Proton donor is E209. Mg(2+) is bound by residues D246, E287, and D314. (2R)-2-phosphoglycerate is bound by residues K339, R368, S369, and K390. Catalysis depends on K339, which acts as the Proton acceptor.

It belongs to the enolase family. The cofactor is Mg(2+).

It is found in the cytoplasm. The protein localises to the secreted. Its subcellular location is the cell surface. It catalyses the reaction (2R)-2-phosphoglycerate = phosphoenolpyruvate + H2O. It participates in carbohydrate degradation; glycolysis; pyruvate from D-glyceraldehyde 3-phosphate: step 4/5. Catalyzes the reversible conversion of 2-phosphoglycerate (2-PG) into phosphoenolpyruvate (PEP). It is essential for the degradation of carbohydrates via glycolysis. This chain is Enolase, found in Prochlorococcus marinus (strain MIT 9211).